The chain runs to 159 residues: Ribosomal RNA large subunit methyltransferase H (159 aa).

S-adenosyl-L-methionine-binding positions include Leu-76, Gly-108, and 127–132 (FGLLTL).

This sequence belongs to the RNA methyltransferase RlmH family. Homodimer.

It localises to the cytoplasm. It catalyses the reaction pseudouridine(1915) in 23S rRNA + S-adenosyl-L-methionine = N(3)-methylpseudouridine(1915) in 23S rRNA + S-adenosyl-L-homocysteine + H(+). Its function is as follows. Specifically methylates the pseudouridine at position 1915 (m3Psi1915) in 23S rRNA. This chain is Ribosomal RNA large subunit methyltransferase H, found in Streptococcus pyogenes serotype M18 (strain MGAS8232).